A 439-amino-acid polypeptide reads, in one-letter code: Proline--tRNA ligase (439 aa).

This sequence belongs to the class-II aminoacyl-tRNA synthetase family. ProS type 2 subfamily. In terms of assembly, homodimer.

It is found in the cytoplasm. The enzyme catalyses tRNA(Pro) + L-proline + ATP = L-prolyl-tRNA(Pro) + AMP + diphosphate. In terms of biological role, catalyzes the attachment of proline to tRNA(Pro) in a two-step reaction: proline is first activated by ATP to form Pro-AMP and then transferred to the acceptor end of tRNA(Pro). This chain is Proline--tRNA ligase, found in Nitrobacter winogradskyi (strain ATCC 25391 / DSM 10237 / CIP 104748 / NCIMB 11846 / Nb-255).